The following is a 239-amino-acid chain: Phosducin-like protein 3 (239 aa).

N-acetylmethionine is present on Met-1. A Phosducin domain is found at 32-180; the sequence is EAEEEQRILQ…EGDIKAQFIG (149 aa). Ser-43 is subject to Phosphoserine. The tract at residues 91 to 239 is thioredoxin fold; it reads FGEVLEISGK…MKRDSDSEGD (149 aa). Interaction with XIAP stretches follow at residues 97-99 and 153-155; these read ISG and TCI. Phosphoserine is present on residues Ser-234 and Ser-236.

The protein belongs to the phosducin family. As to quaternary structure, interacts (via thioredoxin fold region) with KDR/VEGFR2 (via juxtamembrane domain). Forms ternary complexes with the chaperonin CCT complex and actin substrate, leading to inhibition of actin folding. Interacts with XIAP (via BIR 3 and RING domain). Interacts with HSP90AA1 and HSP90AB1. N-terminal methionine acetylation destabilizes the protein. Expressed in endothelial cells (at protein level). Expressed in all tissues examined including spleen, thymus, prostate, testis, ovary, small intestine and colon.

The protein localises to the cytoplasm. It is found in the perinuclear region. It localises to the endoplasmic reticulum. Its function is as follows. Acts as a chaperone for the angiogenic VEGF receptor KDR/VEGFR2, increasing its abundance by inhibiting its ubiquitination and degradation. Inhibits the folding activity of the chaperonin-containing T-complex (CCT) which leads to inhibition of cytoskeletal actin folding. Acts as a chaperone during heat shock alongside HSP90 and HSP40/70 chaperone complexes. Modulates the activation of caspases during apoptosis. The sequence is that of Phosducin-like protein 3 (PDCL3) from Homo sapiens (Human).